Consider the following 178-residue polypeptide: N-alpha-acetyltransferase 80 (178 aa).

The N-acetyltransferase domain maps to 26 to 178 (VPIHNYPELM…AKKKYMKKVL (153 aa)). Substrate-binding positions include Arg48, 53-56 (RMRS), Asn88, and Ser98. Acetyl-CoA contacts are provided by residues 99–101 (VVV) and 107–112 (GQGFGK). Position 134 (Ser134) interacts with substrate. Gln138 is an acetyl-CoA binding site.

Belongs to the acetyltransferase family.

The enzyme catalyses N-terminal L-aspartyl-L-aspartyl-L-aspartyl-[protein] + acetyl-CoA = N-terminal N-acetyl-L-aspartyl-L-aspartyl-L-aspartyl-[protein] + CoA + H(+). The catalysed reaction is N-terminal L-glutamyl-L-glutamyl-L-glutamyl-[protein] + acetyl-CoA = N-terminal N-acetyl-L-glutamyl-L-glutamyl-L-glutamyl-[protein] + CoA + H(+). Its function is as follows. N-alpha-acetyltransferase that acetylates the amino terminal acidic residue of proteins devoid of initiator methionine. Preferentially acts on proteins starting with Asp-Asp-Asp and Glu-Glu-Glu sequences. In vitro, shows high activity towards N-terminal sequences starting with Met-Asp-Glu-Leu, Met-Glu-Glu-Glu and Met-Asp-Asp-Asp. This Drosophila melanogaster (Fruit fly) protein is N-alpha-acetyltransferase 80.